A 508-amino-acid polypeptide reads, in one-letter code: Cytochrome P450 monooxygenase aflV (508 aa).

A helical transmembrane segment spans residues 18–38 (LTWWFLAVGGAWIVSKIIKIL). Asn192, Asn209, Asn302, and Asn408 each carry an N-linked (GlcNAc...) asparagine glycan. Cys453 contributes to the heme binding site.

This sequence belongs to the cytochrome P450 family. Heme is required as a cofactor.

It localises to the membrane. It participates in mycotoxin biosynthesis; aflatoxin biosynthesis. In terms of biological role, cytochrome P450 monooxygenase; part of the gene cluster that mediates the biosynthesis of aflatoxins, a group of polyketide-derived furanocoumarins, and part of the most toxic and carcinogenic compounds among the known mycotoxins. The four major aflatoxins produced by A.parasiticus are aflatoxin B1 (AFB1), aflatoxin B2 (AFB2), aflatoxin G1 (AFG1) and aflatoxin G2 (AFG2). The role of the cytochrome P450 monooxygenase aflV in aflatoxin biosynthesis has still to be characterized. The biosynthesis of aflatoxins begins with the norsolorinic acid synthase aflC that combines a hexanoyl starter unit produced by the fatty acid synthase aflA/aflB and 7 malonyl-CoA extender units to synthesize the precursor NOR. The second step is the conversion of NOR to averantin and requires the norsolorinic acid ketoreductase aflD, which catalyzes the dehydration of norsolorinic acid to form (1'S)-averantin. The norsolorinic acid reductases aflE and aflF may also play a role in the conversion of NOR to AVN. The cytochrome P450 monooxygenase aflG then catalyzes the hydroxylation of AVN to 5'hydroxyaverantin (HAVN). The next step is performed by the 5'-hydroxyaverantin dehydrogenase aflH that transforms HAVN to 5'-oxoaverantin (OAVN) which is further converted to averufin (AVF) by aflK that plays a dual role in the pathway, as a 5'-oxoaverantin cyclase that mediates conversion of 5'-oxoaverantin, as well as a versicolorin B synthase in a later step in the pathway. The averufin oxidase aflI catalyzes the conversion of AVF to versiconal hemiacetal acetate (VHA). VHA is then the substrate for the versiconal hemiacetal acetate esterase aflJ to yield versiconal (VAL). Versicolorin B synthase aflK then converts VAL to versicolorin B (VERB) by closing the bisfuran ring of aflatoxin which is required for DNA-binding, thus giving to aflatoxin its activity as a mutagen. Then, the activity of the versicolorin B desaturase aflL leads to versicolorin A (VERA). A branch point starts from VERB since it can also be converted to dihydrodemethylsterigmatocystin (DMDHST), probably also by aflL, VERA being a precursor for aflatoxins B1 and G1, and DMDHST for aflatoxins B2 and G2. Next, the versicolorin reductase aflM and the cytochrome P450 monooxygenase aflN are involved in conversion of VERA to demethylsterigmatocystin (DMST). AflX and aflY seem also involved in this step, through probable aflX-mediated epoxide ring-opening step following versicolorin A oxidation and aflY-mediated Baeyer-Villiger oxidation required for the formation of the xanthone ring. The methyltransferase aflO then leads to the modification of DMST to sterigmatocystin (ST), and of DMDHST to dihydrosterigmatocystin (DHST). Both ST and DHST are then substrates of the O-methyltransferase aflP to yield O-methylsterigmatocystin (OMST) and dihydro-O-methylsterigmatocystin (DHOMST), respectively. Finally OMST is converted to aflatoxins B1 and G1, and DHOMST to aflatoxins B2 and G2, via the action of several enzymes including O-methylsterigmatocystin oxidoreductase aflQ, the cytochrome P450 monooxygenase aflU, but also the NADH-dependent flavin oxidoreductase nadA which is specifically required for the synthesis of AFG1. This is Cytochrome P450 monooxygenase aflV from Aspergillus parasiticus (strain ATCC 56775 / NRRL 5862 / SRRC 143 / SU-1).